A 362-amino-acid chain; its full sequence is Serpentine receptor class delta-2 (362 aa).

Helical transmembrane passes span 27–47 (LSCL…YLIW), 57–77 (YAIY…ISFF), 104–124 (FCYF…WILL), 144–164 (LIRN…VYVF), 209–229 (LISI…ILYF), 264–284 (GIPI…FGII), and 292–312 (ITFR…IIFV).

It belongs to the nematode receptor-like protein srd family.

The protein resides in the membrane. Functionally, thought to be a chemosensory receptor. In Caenorhabditis elegans, this protein is Serpentine receptor class delta-2 (srd-2).